A 94-amino-acid polypeptide reads, in one-letter code: Aspartyl/glutamyl-tRNA(Asn/Gln) amidotransferase subunit C (94 aa).

This sequence belongs to the GatC family. As to quaternary structure, heterotrimer of A, B and C subunits.

It catalyses the reaction L-glutamyl-tRNA(Gln) + L-glutamine + ATP + H2O = L-glutaminyl-tRNA(Gln) + L-glutamate + ADP + phosphate + H(+). The catalysed reaction is L-aspartyl-tRNA(Asn) + L-glutamine + ATP + H2O = L-asparaginyl-tRNA(Asn) + L-glutamate + ADP + phosphate + 2 H(+). Allows the formation of correctly charged Asn-tRNA(Asn) or Gln-tRNA(Gln) through the transamidation of misacylated Asp-tRNA(Asn) or Glu-tRNA(Gln) in organisms which lack either or both of asparaginyl-tRNA or glutaminyl-tRNA synthetases. The reaction takes place in the presence of glutamine and ATP through an activated phospho-Asp-tRNA(Asn) or phospho-Glu-tRNA(Gln). This chain is Aspartyl/glutamyl-tRNA(Asn/Gln) amidotransferase subunit C, found in Desulfitobacterium hafniense (strain DSM 10664 / DCB-2).